The chain runs to 233 residues: Putative N-acetylmannosamine-6-phosphate 2-epimerase (233 aa).

The protein belongs to the NanE family.

It catalyses the reaction an N-acyl-D-glucosamine 6-phosphate = an N-acyl-D-mannosamine 6-phosphate. It functions in the pathway amino-sugar metabolism; N-acetylneuraminate degradation; D-fructose 6-phosphate from N-acetylneuraminate: step 3/5. In terms of biological role, converts N-acetylmannosamine-6-phosphate (ManNAc-6-P) to N-acetylglucosamine-6-phosphate (GlcNAc-6-P). This chain is Putative N-acetylmannosamine-6-phosphate 2-epimerase, found in Yersinia pseudotuberculosis serotype IB (strain PB1/+).